The primary structure comprises 156 residues: Translation initiation factor IF-1, chloroplastic (156 aa).

Residues Met1–Ser81 constitute a chloroplast transit peptide. The disordered stretch occupies residues Lys51 to Cys79. Residues Asn67–Ser76 show a composition bias toward low complexity. The region spanning Gln82 to Arg151 is the S1-like domain.

This sequence belongs to the IF-1 family. In terms of assembly, component of the 30S ribosomal translation pre-initiation complex which assembles on the 30S ribosome in the order IF-2 and IF-3, IF-1 and N-formylmethionyl-tRNA(fMet); mRNA recruitment can occur at any time during PIC assembly.

It localises to the plastid. Its subcellular location is the chloroplast. Its function is as follows. One of the essential components for the initiation of protein synthesis. Stabilizes the binding of IF-2 and IF-3 on the 30S subunit to which N-formylmethionyl-tRNA(fMet) subsequently binds. Helps modulate mRNA selection, yielding the 30S pre-initiation complex (PIC). Upon addition of the 50S ribosomal subunit IF-1, IF-2 and IF-3 are released leaving the mature 70S translation initiation complex. This chain is Translation initiation factor IF-1, chloroplastic (infA), found in Solanum lycopersicum (Tomato).